The following is a 678-amino-acid chain: Pescadillo homolog (678 aa).

Residues 283–303 (EEEEPEEVDSEAGDEDDDDLP) show a composition bias toward acidic residues. The interval 283-316 (EEEEPEEVDSEAGDEDDDDLPVLDSGTRRRRAAA) is disordered. The BRCT domain occupies 361–451 (VCGSLFRGRV…VLMPTDLYAP (91 aa)). Residues 552–587 (MTRKARKMYNNMKQKEAAKQERVQQLESKKAKLAAT) are a coiled coil. The segment at 563–678 (MKQKEAAKQE…DAAPAKRQRR (116 aa)) is disordered. A compositionally biased stretch (basic and acidic residues) spans 564-581 (KQKEAAKQERVQQLESKK). 2 stretches are compositionally biased toward low complexity: residues 597 to 618 (KPAA…VAAS) and 630 to 661 (APAP…AAKE). Positions 662–672 (APAKGGKDAAP) are enriched in basic and acidic residues.

Belongs to the pescadillo family.

Its subcellular location is the nucleus. It is found in the nucleolus. The protein localises to the nucleoplasm. In terms of biological role, required for maturation of ribosomal RNAs and formation of the large ribosomal subunit. This is Pescadillo homolog from Chlamydomonas reinhardtii (Chlamydomonas smithii).